Consider the following 529-residue polypeptide: NAD(P)H-quinone oxidoreductase chain 4 1 (529 aa).

13 helical membrane passes run 4–24 (FPWL…IPFI), 36–56 (WYAL…FTNF), 91–111 (LILL…PVTL), 115–135 (LFYF…AVQD), 137–157 (LVFF…LAIW), 169–189 (FILY…AMAF), 209–229 (GFQL…LPIV), 243–263 (TAPV…YALI), 277–297 (FAPV…LTSY), 314–334 (IGFV…GAVL), 335–355 (QMVS…ATYD), 387–407 (LALP…GFAT), and 417–437 (VIVV…LLSM).

It belongs to the complex I subunit 4 family.

Its subcellular location is the cellular thylakoid membrane. It carries out the reaction a plastoquinone + NADH + (n+1) H(+)(in) = a plastoquinol + NAD(+) + n H(+)(out). The enzyme catalyses a plastoquinone + NADPH + (n+1) H(+)(in) = a plastoquinol + NADP(+) + n H(+)(out). In terms of biological role, NDH-1 shuttles electrons from NAD(P)H, via FMN and iron-sulfur (Fe-S) centers, to quinones in the respiratory chain. The immediate electron acceptor for the enzyme in this species is believed to be plastoquinone. Couples the redox reaction to proton translocation (for every two electrons transferred, four hydrogen ions are translocated across the cytoplasmic membrane), and thus conserves the redox energy in a proton gradient. This is NAD(P)H-quinone oxidoreductase chain 4 1 from Thermosynechococcus vestitus (strain NIES-2133 / IAM M-273 / BP-1).